A 322-amino-acid polypeptide reads, in one-letter code: MTIATDMHKEAAGLSTEALLRRVQALKKEMNAIILAHYYTLPEIQQAADIVGDSLALARAAEKTSADVIVFAGVYFMAETAKILNPGKMVLMPDPGAGCPLADSCPEEEFRAFRQAHPDAIAITYVNSSAAIKKLSDIICTSSNAEHIVRQIPPEQQIIFGPDRNLGAWVMKRTGRDMLLWQGFCYVHDAYSEVYMIQAKAMYPDAELIAHPECREEVLRQASFVGSTSALLDYTEKSPRKSFIVATEPGILYEMEKRSPGKVFIPAPKDPANPRSVCKQMKQNTLDKLYLCMVNRSPEITVDESLREGALKSIKRMLEMSA.

H37 and S54 together coordinate iminosuccinate. Residue C99 participates in [4Fe-4S] cluster binding. Residues 125-127 (YVN) and S142 each bind iminosuccinate. C185 is a [4Fe-4S] cluster binding site. Residues 211-213 (HPE) and T228 contribute to the iminosuccinate site. C278 serves as a coordination point for [4Fe-4S] cluster.

The protein belongs to the quinolinate synthase family. Type 2 subfamily. [4Fe-4S] cluster is required as a cofactor.

Its subcellular location is the cytoplasm. The enzyme catalyses iminosuccinate + dihydroxyacetone phosphate = quinolinate + phosphate + 2 H2O + H(+). Its pathway is cofactor biosynthesis; NAD(+) biosynthesis; quinolinate from iminoaspartate: step 1/1. Functionally, catalyzes the condensation of iminoaspartate with dihydroxyacetone phosphate to form quinolinate. This Chlorobaculum tepidum (strain ATCC 49652 / DSM 12025 / NBRC 103806 / TLS) (Chlorobium tepidum) protein is Quinolinate synthase.